The chain runs to 212 residues: Anaphase-promoting complex subunit 10 (212 aa).

The region spanning 12-196 (MDEEERTSSR…PSAVLEARPG (185 aa)) is the DOC domain.

The protein belongs to the APC10 family. As to quaternary structure, the APC/C complex is probably composed of at least 12 subunits: apc-2, apc-10, apc-11, cdc-26, emb-1, emb-27, emb-30, mat-1, mat-2, mat-3, such-1 and gfi-3.

The protein operates within protein modification; protein ubiquitination. Functionally, probable component of the anaphase promoting complex/cyclosome (APC/C), a cell cycle-regulated E3 ubiquitin ligase that controls progression through mitosis and the G1 phase of the cell cycle. The APC/C complex acts by mediating ubiquitination and subsequent degradation of target proteins. In Caenorhabditis elegans, this protein is Anaphase-promoting complex subunit 10.